The chain runs to 59 residues: Dendroaspin (59 aa).

4 disulfides stabilise this stretch: Cys-3-Cys-22, Cys-17-Cys-37, Cys-39-Cys-51, and Cys-52-Cys-57. Positions Arg-43–Asp-45 match the Cell attachment site motif.

It belongs to the three-finger toxin family. Short-chain subfamily. Antiplatelet toxin sub-subfamily. In terms of tissue distribution, expressed by the venom gland.

It localises to the secreted. Inhibits ADP-induced platelet aggregation and inhibits the binding of purified platelet fibrinogen receptor alpha-IIb/beta-3 (ITGA2B/ITGB3) to immobilized fibrinogen. Has also been described to inhibit cell adhesion to fibrinogen, fibronectin, laminin and collagen. This chain is Dendroaspin, found in Dendroaspis jamesoni kaimosae (Eastern Jameson's mamba).